The following is a 64-amino-acid chain: Large ribosomal subunit protein uL29 (64 aa).

The protein belongs to the universal ribosomal protein uL29 family.

The sequence is that of Large ribosomal subunit protein uL29 from Synechococcus elongatus (strain ATCC 33912 / PCC 7942 / FACHB-805) (Anacystis nidulans R2).